A 135-amino-acid polypeptide reads, in one-letter code: Methylglyoxal synthase (135 aa).

The region spanning Met-1 to Ala-135 is the MGS-like domain. Substrate-binding positions include His-12, Lys-16, Thr-38–Thr-41, and Ser-58–Gly-59. The active-site Proton donor/acceptor is Asp-64. His-91 lines the substrate pocket.

The protein belongs to the methylglyoxal synthase family.

The catalysed reaction is dihydroxyacetone phosphate = methylglyoxal + phosphate. Catalyzes the formation of methylglyoxal from dihydroxyacetone phosphate. This Ralstonia nicotianae (strain ATCC BAA-1114 / GMI1000) (Ralstonia solanacearum) protein is Methylglyoxal synthase.